The chain runs to 238 residues: Ribonuclease PH (238 aa).

Residues Arg-86 and 124–126 (GTR) each bind phosphate.

It belongs to the RNase PH family. As to quaternary structure, homohexameric ring arranged as a trimer of dimers.

The enzyme catalyses tRNA(n+1) + phosphate = tRNA(n) + a ribonucleoside 5'-diphosphate. Phosphorolytic 3'-5' exoribonuclease that plays an important role in tRNA 3'-end maturation. Removes nucleotide residues following the 3'-CCA terminus of tRNAs; can also add nucleotides to the ends of RNA molecules by using nucleoside diphosphates as substrates, but this may not be physiologically important. Probably plays a role in initiation of 16S rRNA degradation (leading to ribosome degradation) during starvation. This chain is Ribonuclease PH, found in Rhizorhabdus wittichii (strain DSM 6014 / CCUG 31198 / JCM 15750 / NBRC 105917 / EY 4224 / RW1) (Sphingomonas wittichii).